Reading from the N-terminus, the 174-residue chain is Translationally-controlled tumor protein homolog 1 (174 aa).

One can recognise a TCTP domain in the interval 1–174 (MRVFKDIVGY…FKDGLESVKY (174 aa)).

Belongs to the TCTP family.

The protein localises to the cytoplasm. Functionally, involved in calcium binding and microtubule stabilization. The sequence is that of Translationally-controlled tumor protein homolog 1 from Dictyostelium discoideum (Social amoeba).